We begin with the raw amino-acid sequence, 238 residues long: Ribonuclease HII (238 aa).

The RNase H type-2 domain occupies 23–215 (QRLCGVDEAG…VREALARLPM (193 aa)). Residues Asp-29, Glu-30, and Asp-124 each coordinate a divalent metal cation.

This sequence belongs to the RNase HII family. The cofactor is Mn(2+). Mg(2+) is required as a cofactor.

The protein localises to the cytoplasm. The enzyme catalyses Endonucleolytic cleavage to 5'-phosphomonoester.. Its function is as follows. Endonuclease that specifically degrades the RNA of RNA-DNA hybrids. In Cupriavidus necator (strain ATCC 17699 / DSM 428 / KCTC 22496 / NCIMB 10442 / H16 / Stanier 337) (Ralstonia eutropha), this protein is Ribonuclease HII.